Reading from the N-terminus, the 715-residue chain is MPKPRGRRVQSAFKERVENSEATHENSIAETGSDVEISLHEDQPQTSDNKNQGEFSSVFYGLVDSAEIDYFKQAESTLNANVFESDEDRAGFIRSVLEESRGKELKLVTNQICSKLMERLVLLASDRQLKHIFHQFLGHFPALAHHKYSSHVLETLLVRSAALIEKEIVNEYQQDEEDQDENADNDEDNFVASTTMESMFLQMLDQLEPYWSSMIQHQYASHVMRIIILIVSGKELPSSTMANSVLRSKKSKVARKMIEIKDNEDFNRAYQVPSSFKDRLRTIISAVSSPLDTKSARSLAIHKVASPVLQLIIRVEGIVDKERSVWHLIFLSEKAPKDSSEEAFVEYLLSDSVGSHFLEAIIKNDGARMKYIERLYRLYMKDRVLKLARRATTGVYIIQALLLKLKPGEVEHILDEIIPELSSLISISESQNIDLGKAIIDASISRFNYRRDELIEQLFQKFAPNYNVSDPSEDTTTELFENVLQLASSTLGNTRDDWPTAEERRRSLFLEKLMQYDYSFVVCVWLNCMALPQERLMQMCFHGVFSHVIEHALVVKPASEGEPKEVLILRKKFLNLFQGKIFELACNSYGSHIVDKLWDFTVLLPMYKDRIASEMMAQANRVKDSTYGRLVWKNWSMELFVRKKYDWKVLVKEQEENYYAEEGTQGDAMKKKKPIELKMEEIFKKKQYQEERAKREGEDLAGSNQKRMKGRGRNR.

Residues Met1 to Gln52 are disordered. The segment covering Phe13–His24 has biased composition (basic and acidic residues). 8 Pumilio repeats span residues Glu99–His134, Gln135–Asn170, Gln206–Asn243, Leu291–Trp326, Ser340–Arg377, Tyr379–Asp415, Leu531–Ile568, and Asn575–Ser613. Over residues Tyr688–Glu698 the composition is skewed to basic and acidic residues. Residues Tyr688–Arg715 form a disordered region. Over residues Lys706–Arg715 the composition is skewed to basic residues.

The protein belongs to the NOP9 family.

It is found in the nucleus. It localises to the nucleolus. Its function is as follows. RNA-binding nucleolar protein required for pre-rRNA processing. Involved in production of 18S rRNA and assembly of small ribosomal subunit. In Clavispora lusitaniae (strain ATCC 42720) (Yeast), this protein is Nucleolar protein 9 (NOP9).